The chain runs to 162 residues: Ubiquitin-fold modifier-conjugating enzyme 1 (162 aa).

The active-site Glycyl thioester intermediate is cysteine 115.

This sequence belongs to the ubiquitin-conjugating enzyme family. UFC1 subfamily. In terms of assembly, interacts with uba-5. Expressed in the intestine.

In terms of biological role, E2-like enzyme which forms an intermediate with ufm-1. The intermediate is formed via a thioester linkage. The sequence is that of Ubiquitin-fold modifier-conjugating enzyme 1 from Caenorhabditis elegans.